Reading from the N-terminus, the 1877-residue chain is Transmembrane protein 131 (1877 aa).

The N-terminal stretch at 1–20 (MGKRAGGAAAAAAAASTSSA) is a signal peptide. The Lumenal portion of the chain corresponds to 21 to 1115 (AGLEPAAGRG…AEALPRPNWE (1095 aa)). The tract at residues 107 to 281 (RFEPPMLDFH…ETKGVMRASF (175 aa)) is papD-L domain. A helical transmembrane segment spans residues 1116 to 1136 (LALYIIISGVMSALFLLVIGT). The Cytoplasmic segment spans residues 1137–1877 (AYLEAQGIWE…WSNSHFPHEN (741 aa)). Residues 1197–1227 (NASSRPGTGSHRQCGTSVHPHSSHGSKNSAD) are compositionally biased toward polar residues. Disordered regions lie at residues 1197-1573 (NASS…SSST), 1590-1655 (LKQR…NPTF), 1679-1707 (SDFS…SPVS), and 1830-1852 (NSAA…TYNP). Residues 1233-1258 (TRNSSSMSSRTSPQAAASQSTSKTSP) show a composition bias toward low complexity. Residues 1301 to 1311 (QPPPPVPQHQE) are compositionally biased toward pro residues. 2 positions are modified to phosphoserine: serine 1318 and serine 1338. Composition is skewed to basic and acidic residues over residues 1326–1339 (SHPE…HSSE) and 1349–1360 (AMDKDFDHHDSS). Serine 1371 bears the Phosphoserine mark. Residues 1376–1391 (SKGKGKSLQQRKAKPP) are compositionally biased toward basic residues. Residues 1392 to 1414 (KKQEEKEKRGKGKPQEDELKDAL) show a composition bias toward basic and acidic residues. Positions 1420-1432 (SSTTTETSNPDTE) are enriched in low complexity. 2 stretches are compositionally biased toward polar residues: residues 1507–1523 (TLAS…TKGT) and 1538–1550 (LPSS…TSSS). The segment covering 1599–1608 (PASPSLPTAP) has biased composition (pro residues). Positions 1609 to 1646 (CPFTSRGSYSSVVNSSGSDTKAKQTSSSKSKLTKAASL) are enriched in low complexity. A compositionally biased stretch (polar residues) spans 1830–1839 (NSAAAHTPSA). 2 positions are modified to phosphoserine: serine 1857 and serine 1865.

Belongs to the TMEM131 family. Interacts (via PapD-L domain) with COL1A2 (via C-terminus); the interaction is direct, may occur with other collagen proteins, and is involved in assembly and TRAPPIII ER-to-Golgi transport complex-dependent secretion of collagen. Interacts (via C-terminus) with TRAPPC8 (via C-terminus); the interaction is direct.

It is found in the membrane. In terms of biological role, collagen binding transmembrane protein involved in collagen secretion by recruiting the ER-to-Golgi transport complex TRAPPIII. May play a role in the immune response to viral infection. The polypeptide is Transmembrane protein 131 (Mus musculus (Mouse)).